We begin with the raw amino-acid sequence, 316 residues long: 4-hydroxy-3-methylbut-2-enyl diphosphate reductase (316 aa).

A [4Fe-4S] cluster-binding site is contributed by cysteine 12. (2E)-4-hydroxy-3-methylbut-2-enyl diphosphate contacts are provided by histidine 41 and histidine 74. Positions 41 and 74 each coordinate dimethylallyl diphosphate. 2 residues coordinate isopentenyl diphosphate: histidine 41 and histidine 74. Cysteine 96 is a [4Fe-4S] cluster binding site. Histidine 124 serves as a coordination point for (2E)-4-hydroxy-3-methylbut-2-enyl diphosphate. Dimethylallyl diphosphate is bound at residue histidine 124. Histidine 124 serves as a coordination point for isopentenyl diphosphate. The active-site Proton donor is glutamate 126. Threonine 169 lines the (2E)-4-hydroxy-3-methylbut-2-enyl diphosphate pocket. Residue cysteine 199 participates in [4Fe-4S] cluster binding. Positions 227, 228, 229, and 271 each coordinate (2E)-4-hydroxy-3-methylbut-2-enyl diphosphate. The dimethylallyl diphosphate site is built by serine 227, serine 228, asparagine 229, and serine 271. Serine 227, serine 228, asparagine 229, and serine 271 together coordinate isopentenyl diphosphate.

This sequence belongs to the IspH family. It depends on [4Fe-4S] cluster as a cofactor.

The enzyme catalyses isopentenyl diphosphate + 2 oxidized [2Fe-2S]-[ferredoxin] + H2O = (2E)-4-hydroxy-3-methylbut-2-enyl diphosphate + 2 reduced [2Fe-2S]-[ferredoxin] + 2 H(+). It carries out the reaction dimethylallyl diphosphate + 2 oxidized [2Fe-2S]-[ferredoxin] + H2O = (2E)-4-hydroxy-3-methylbut-2-enyl diphosphate + 2 reduced [2Fe-2S]-[ferredoxin] + 2 H(+). The protein operates within isoprenoid biosynthesis; dimethylallyl diphosphate biosynthesis; dimethylallyl diphosphate from (2E)-4-hydroxy-3-methylbutenyl diphosphate: step 1/1. It participates in isoprenoid biosynthesis; isopentenyl diphosphate biosynthesis via DXP pathway; isopentenyl diphosphate from 1-deoxy-D-xylulose 5-phosphate: step 6/6. Its function is as follows. Catalyzes the conversion of 1-hydroxy-2-methyl-2-(E)-butenyl 4-diphosphate (HMBPP) into a mixture of isopentenyl diphosphate (IPP) and dimethylallyl diphosphate (DMAPP). Acts in the terminal step of the DOXP/MEP pathway for isoprenoid precursor biosynthesis. In Xylella fastidiosa (strain M12), this protein is 4-hydroxy-3-methylbut-2-enyl diphosphate reductase.